The primary structure comprises 208 residues: Outer-membrane lipoprotein carrier protein (208 aa).

Residues 1–24 form the signal peptide; the sequence is MRMNIVQKILSATCFALLPLLAHA.

Belongs to the LolA family. In terms of assembly, monomer.

The protein resides in the periplasm. Functionally, participates in the translocation of lipoproteins from the inner membrane to the outer membrane. Only forms a complex with a lipoprotein if the residue after the N-terminal Cys is not an aspartate (The Asp acts as a targeting signal to indicate that the lipoprotein should stay in the inner membrane). The polypeptide is Outer-membrane lipoprotein carrier protein (Dechloromonas aromatica (strain RCB)).